We begin with the raw amino-acid sequence, 307 residues long: N-acetylmuramic acid 6-phosphate etherase (307 aa).

Positions V62–K225 constitute an SIS domain. The Proton donor role is filled by E90. E121 is a catalytic residue.

The protein belongs to the GCKR-like family. MurNAc-6-P etherase subfamily. In terms of assembly, homodimer.

The enzyme catalyses N-acetyl-D-muramate 6-phosphate + H2O = N-acetyl-D-glucosamine 6-phosphate + (R)-lactate. The protein operates within amino-sugar metabolism; 1,6-anhydro-N-acetylmuramate degradation. It participates in amino-sugar metabolism; N-acetylmuramate degradation. It functions in the pathway cell wall biogenesis; peptidoglycan recycling. Specifically catalyzes the cleavage of the D-lactyl ether substituent of MurNAc 6-phosphate, producing GlcNAc 6-phosphate and D-lactate. Together with AnmK, is also required for the utilization of anhydro-N-acetylmuramic acid (anhMurNAc) either imported from the medium or derived from its own cell wall murein, and thus plays a role in cell wall recycling. The protein is N-acetylmuramic acid 6-phosphate etherase of Brucella anthropi (strain ATCC 49188 / DSM 6882 / CCUG 24695 / JCM 21032 / LMG 3331 / NBRC 15819 / NCTC 12168 / Alc 37) (Ochrobactrum anthropi).